A 1958-amino-acid polypeptide reads, in one-letter code: MADRTAPRCQLRLEWVYGYRGHQCRNNLYYTAGKEVVYFVAGVGVVYNTREHSQKFFLGHNDDIISLALHPDKTLIATGQVGKEPYICIWNSYNVHTVSILKDVHTHGVACLAFDSDGQHLASVGLDAKNTVCIWDWRKGKLLASATGHSDRIFDISWDPYQPNRMVSCGVKHIKFWTLCGNALTAKRGIFGKTGDLQTILCLACAKEDITYSGALNGDIYVWKGLTLVRTIQGAHSAGIFSLYACEEGFATGGRDGCIRLWDTDFKPITKIDLRETEQGYKGLSIRSVCWKADRLLAGTQDSEIFEVIVRERDKPMLILQGHCEGELWALALHPKKPLAVTGSDDRSVRLWSLADHALIARCNMEEAVRSVSFSPDGSQLALGMKDGSFIVLRVRDMTEVVHIKDRKEVIHEMKFSPDGSYLAVGSNDGPVDVYAVAQRYKKIGECNKSLSFITHIDWSLDSKYLQTNDGAGERLFYKMPSGKPLTSKEEIKGIPWASWTCVRGPEVSGIWPKYTEVIDINSVDANYNSSVLVSGDDFGLVKLFKFPCLKKGAKFRKYVGHSAHVTNVRWSHDFQWVLSTGGADHSVFQWRFIPEAVSNGVLETTPQEGGADSYSEESDSDFSDVPELDSDIEQETQINYDRQVYKEDLPQLKQQSKEKNHAVPFLKREKAPEDSLKLQFIHGYRGYDCRNNLFYTQAGEVVYHIAAVAVVYNRQQHAQRLYLGHDDDILSLTIHPVKDYVATGQVGRDAAVHVWDTQTLKCLSLLKGHHQRGVCALDFSADGKCLVSVGLDDFHSVVFWDWKKGEKIATTRGHKDKIFVVKCNPQHADKLVTVGIKHIKFWQQAGGGFTSKRGSFGSAGKLETMMCVSYGRMEDLVFSGAATGDIFIWKDVLLLKTVKAHDGPVFAMYALDKGFVTGGKDGIVELWDDMFERCLKTYAIKRTALSTSSKGLLLEDNPSIRAITLGHGHILVGTKNGEILEIDKSGPMTLLVQGHMEGEVWGLAAHPLLPICATVSDDKTLRIWELSSQHRMLAVRKLKKGGRCCAFSPDGKALAVGLNDGSFLVVNADTVEDMLSFHHRKEMISDIKFSKDTGKYLAVASHDNFVDIYNVLTSKRVGICKGASSYITHIDWDSRGKLLQVNSGAKEQLFFEAPRGRKHTIRPSEAEKIEWDTWTCVLGPTCEGIWPAHSDVTDVNAANLTKDGSLLATGDDFGFVKLFSYPVKGQHARFKKYVGHSAHVTNVRWLHNDSVLLTVGGADTALMIWTREFVGTQESKLVDSEESDTDAEEDGGYDSDVAREKAIDYTTKIYAVSIREMEGTKPHQQLKEVSMEERPPVSRAAPQPEKLQKNNITKKKKLVEELALDHVFGYRGFDCRNNLHYLNDGADIIFHTAAAGIVQNLSTGSQSFYLEHTDDILCLTVNQHPKYRNVVATSQIGTTPSIHIWDAMTKHTLSMLRCFHTKGVNYINFSATGKLLVSVGVDPEHTITVWRWQEGTKVASRGGHLERIFVVEFRPDSDTQFVSVGVKHMKFWTLAGSALLYKKGVIGSMEAAKMQTMLSVAFGANNLTFTGAINGDVYVWKEHFLIRLVAKAHTGPVFTMYTTLRDGLIVTGGKERPTKEGGAVKLWDQEMKRCRAFQLETGQLVECVRSVCRGKGKILVGTKDGEIIEVGEKSAASNILIDGHMEGEIWGLATHPSKDMFISASNDGTARIWDLADKKLLNKVNLGHAARCAAYSPDGEMVAIGMKNGEFVILLVNTLKVWGKKRDRKSAIQDIRISPDNRFLAVGSSEQTVDFYDLTQGTSLNRIGYCKDIPSFVIQMDFSADSKYIQVSTGAYKRQVHEVPLGKQVTEAMVVEKITWASWTSVLGDEVIGIWPRNADKADVNCACVTHAGLNIVTGDDFGLLKLFDFPCTEKFAKHKRYFGHSAHVTNIRFSSDDKYVVSTGGDDCSVFVWRCL.

10 WD repeats span residues 59 to 100, 104 to 145, 148 to 187, 195 to 233, 235 to 273, 280 to 321, 323 to 362, 364 to 403, 406 to 445, and 561 to 601; these read GHND…TVSI, VHTH…LLAS, GHSD…LTAK, GDLQ…RTIQ, AHSA…TKID, GYKG…LILQ, HCEG…LIAR, NMEE…EVVH, DRKE…KKIG, and GHSA…VSNG. The segment at 604-627 is disordered; the sequence is ETTPQEGGADSYSEESDSDFSDVP. Residues 615-627 show a composition bias toward acidic residues; sequence YSEESDSDFSDVP. WD repeat units lie at residues 725–766, 770–811, 814–853, 861–900, 901–940, 996–1035, 1038–1077, 1080–1120, 1191–1230, and 1236–1276; these read GHDD…CLSL, HHQR…KIAT, GHKD…FTSK, GKLE…KTVK, AHDG…KTYA, HMEG…RMLA, KLKK…DMLS, HRKE…RVGI, SDVT…QHAR, and GHSA…TQES. Over residues 1322-1337 the composition is skewed to basic and acidic residues; it reads KPHQQLKEVSMEERPP. The disordered stretch occupies residues 1322–1352; sequence KPHQQLKEVSMEERPPVSRAAPQPEKLQKNN. WD repeat units follow at residues 1412 to 1456, 1460 to 1501, 1504 to 1543, 1553 to 1591, 1593 to 1638, 1685 to 1724, 1726 to 1767, 1768 to 1807, 1880 to 1919, and 1925 to 1958; these read EHTD…TLSM, FHTK…KVAS, GHLE…LLYK, AKMQ…RLVA, AHTG…CRAF, HMEG…LLNK, NLGH…GKKR, DRKS…SLNR, ADKA…KFAK, and GHSA…WRCL.

Belongs to the WD repeat EMAP family.

The protein localises to the cytoplasm. Its subcellular location is the cytoskeleton. Functionally, may modify the assembly dynamics of microtubules, such that microtubules are slightly longer, but more dynamic. This is Echinoderm microtubule-associated protein-like 6 (Eml6) from Mus musculus (Mouse).